The following is a 291-amino-acid chain: MTERDFDTPVETPTVQPAPAQGTKPAQTVPVVAVVLAAGFGTRFDPDNPKQLVSVGGKPIVCWSIDAFEHCDRVSDIVVVVNPKVRGEVETLVGEMGYTKVRVIIDGGDERVDSTATALDMLATAGIPDDAKILIHDAVRPFVEQSAIDGSIDALDQFTAATVAYASTDTVLLTEDLGDLKVVKSVPDRPNTFRAQTPQSFRFATIRHAYDLAAADPDFHPTDDTRVVVDYLPDEPVAIVSGAETNLKITTLEDIPTAERIAEEILGRDPKEEARARMHALLAQAAGQMHR.

The interval 1–23 is disordered; it reads MTERDFDTPVETPTVQPAPAQGT.

This sequence belongs to the IspD/TarI cytidylyltransferase family. IspD subfamily.

The catalysed reaction is 2-C-methyl-D-erythritol 4-phosphate + CTP + H(+) = 4-CDP-2-C-methyl-D-erythritol + diphosphate. Its pathway is isoprenoid biosynthesis; isopentenyl diphosphate biosynthesis via DXP pathway; isopentenyl diphosphate from 1-deoxy-D-xylulose 5-phosphate: step 2/6. Catalyzes the formation of 4-diphosphocytidyl-2-C-methyl-D-erythritol from CTP and 2-C-methyl-D-erythritol 4-phosphate (MEP). The chain is 2-C-methyl-D-erythritol 4-phosphate cytidylyltransferase from Bifidobacterium longum subsp. infantis (strain ATCC 15697 / DSM 20088 / JCM 1222 / NCTC 11817 / S12).